Here is a 180-residue protein sequence, read N- to C-terminus: Bifunctional protein PyrR (180 aa).

The PRPP-binding signature appears at 101–113 (VILVDDVLYTGRT).

Belongs to the purine/pyrimidine phosphoribosyltransferase family. PyrR subfamily. In terms of assembly, homodimer and homohexamer; in equilibrium.

The catalysed reaction is UMP + diphosphate = 5-phospho-alpha-D-ribose 1-diphosphate + uracil. In terms of biological role, regulates transcriptional attenuation of the pyrimidine nucleotide (pyr) operon by binding in a uridine-dependent manner to specific sites on pyr mRNA. This disrupts an antiterminator hairpin in the RNA and favors formation of a downstream transcription terminator, leading to a reduced expression of downstream genes. Also displays a weak uracil phosphoribosyltransferase activity which is not physiologically significant. The protein is Bifunctional protein PyrR of Bacillus cereus (strain ATCC 14579 / DSM 31 / CCUG 7414 / JCM 2152 / NBRC 15305 / NCIMB 9373 / NCTC 2599 / NRRL B-3711).